A 407-amino-acid chain; its full sequence is 4-hydroxybenzoate polyprenyltransferase, mitochondrial (407 aa).

The N-terminal 20 residues, 1–20, are a transit peptide targeting the mitochondrion; sequence MAFFGLSRVSRRLLKSSVSV. A run of 6 helical transmembrane segments spans residues 137 to 157, 162 to 182, 210 to 230, 254 to 274, 279 to 299, and 330 to 350; these read IGTW…ADPG, FKYM…GCTI, FQGI…LLQL, FTFW…LLGW, GSIA…WTLV, and LWLT…GFSA.

Belongs to the UbiA prenyltransferase family. It depends on Mg(2+) as a cofactor. Expressed in flowers.

It localises to the mitochondrion inner membrane. It carries out the reaction an all-trans-polyprenyl diphosphate + 4-hydroxybenzoate = a 4-hydroxy-3-(all-trans-polyprenyl)benzoate + diphosphate. It functions in the pathway cofactor biosynthesis; ubiquinone biosynthesis. In terms of biological role, catalyzes the prenylation of para-hydroxybenzoate (PHB) with an all-trans polyprenyl group. Mediates the second step in the final reaction sequence of coenzyme Q (CoQ) biosynthesis, which is the condensation of the polyisoprenoid side chain with PHB, generating the first membrane-bound Q intermediate. Required for embryo development. The chain is 4-hydroxybenzoate polyprenyltransferase, mitochondrial from Arabidopsis thaliana (Mouse-ear cress).